We begin with the raw amino-acid sequence, 336 residues long: Tetraacyldisaccharide 4'-kinase (336 aa).

Position 60-67 (60-67) interacts with ATP; that stretch reads TVGGTGKT.

This sequence belongs to the LpxK family.

It catalyses the reaction a lipid A disaccharide + ATP = a lipid IVA + ADP + H(+). It participates in glycolipid biosynthesis; lipid IV(A) biosynthesis; lipid IV(A) from (3R)-3-hydroxytetradecanoyl-[acyl-carrier-protein] and UDP-N-acetyl-alpha-D-glucosamine: step 6/6. Functionally, transfers the gamma-phosphate of ATP to the 4'-position of a tetraacyldisaccharide 1-phosphate intermediate (termed DS-1-P) to form tetraacyldisaccharide 1,4'-bis-phosphate (lipid IVA). The sequence is that of Tetraacyldisaccharide 4'-kinase from Pseudomonas fluorescens (strain SBW25).